Reading from the N-terminus, the 215-residue chain is Methylthioribulose-1-phosphate dehydratase (215 aa).

Positions 103 and 105 each coordinate Zn(2+).

This sequence belongs to the aldolase class II family. MtnB subfamily. Zn(2+) is required as a cofactor.

The enzyme catalyses 5-(methylsulfanyl)-D-ribulose 1-phosphate = 5-methylsulfanyl-2,3-dioxopentyl phosphate + H2O. The protein operates within amino-acid biosynthesis; L-methionine biosynthesis via salvage pathway; L-methionine from S-methyl-5-thio-alpha-D-ribose 1-phosphate: step 2/6. In terms of biological role, catalyzes the dehydration of methylthioribulose-1-phosphate (MTRu-1-P) into 2,3-diketo-5-methylthiopentyl-1-phosphate (DK-MTP-1-P). The polypeptide is Methylthioribulose-1-phosphate dehydratase (Persephonella marina (strain DSM 14350 / EX-H1)).